Reading from the N-terminus, the 70-residue chain is Ranatuerin-2SN1 (70 aa).

The first 22 residues, 1–22 (MFTLKKSLLLIFFLGTISLSLC), serve as a signal peptide directing secretion. The propeptide at 23 to 40 (EKERDADDDEVEVIKQEE) is removed in mature form. Cys-65 and Cys-70 form a disulfide bridge.

It belongs to the frog skin active peptide (FSAP) family. Ranatuerin subfamily. In terms of tissue distribution, expressed by the skin glands.

The protein resides in the secreted. Functionally, antimicrobial peptide. Weakly active against P.faecalis X29. Not active against fungi. Shows very weak hemolytic activity against human erythrocytes. This Sylvirana spinulosa (Fine-spined frog) protein is Ranatuerin-2SN1.